Consider the following 338-residue polypeptide: Glycerol-3-phosphate dehydrogenase [NAD(P)+] (338 aa).

Residues Trp11, Arg30, and Lys109 each coordinate NADPH. Positions 109, 143, and 145 each coordinate sn-glycerol 3-phosphate. Ala147 provides a ligand contact to NADPH. Residues Lys198, Asp251, Ser261, Arg262, and Asn263 each coordinate sn-glycerol 3-phosphate. Lys198 acts as the Proton acceptor in catalysis. An NADPH-binding site is contributed by Arg262. Residues Val286 and Glu288 each contribute to the NADPH site.

This sequence belongs to the NAD-dependent glycerol-3-phosphate dehydrogenase family.

It is found in the cytoplasm. The enzyme catalyses sn-glycerol 3-phosphate + NAD(+) = dihydroxyacetone phosphate + NADH + H(+). It catalyses the reaction sn-glycerol 3-phosphate + NADP(+) = dihydroxyacetone phosphate + NADPH + H(+). It functions in the pathway membrane lipid metabolism; glycerophospholipid metabolism. Catalyzes the reduction of the glycolytic intermediate dihydroxyacetone phosphate (DHAP) to sn-glycerol 3-phosphate (G3P), the key precursor for phospholipid synthesis. The polypeptide is Glycerol-3-phosphate dehydrogenase [NAD(P)+] (Cupriavidus necator (strain ATCC 17699 / DSM 428 / KCTC 22496 / NCIMB 10442 / H16 / Stanier 337) (Ralstonia eutropha)).